A 435-amino-acid polypeptide reads, in one-letter code: Diaminobutyrate--2-oxoglutarate transaminase (435 aa).

Lys-266 is modified (N6-(pyridoxal phosphate)lysine).

This sequence belongs to the class-III pyridoxal-phosphate-dependent aminotransferase family. It depends on pyridoxal 5'-phosphate as a cofactor.

It carries out the reaction L-2,4-diaminobutanoate + 2-oxoglutarate = L-aspartate 4-semialdehyde + L-glutamate. It functions in the pathway amine and polyamine biosynthesis; ectoine biosynthesis; L-ectoine from L-aspartate 4-semialdehyde: step 1/3. Functionally, catalyzes reversively the conversion of L-aspartate beta-semialdehyde (ASA) to L-2,4-diaminobutyrate (DABA) by transamination with L-glutamate. The chain is Diaminobutyrate--2-oxoglutarate transaminase (ectB) from Bordetella bronchiseptica (strain ATCC BAA-588 / NCTC 13252 / RB50) (Alcaligenes bronchisepticus).